We begin with the raw amino-acid sequence, 458 residues long: ATP synthase subunit beta (458 aa).

148–155 (GGAGVGKT) serves as a coordination point for ATP.

It belongs to the ATPase alpha/beta chains family. As to quaternary structure, F-type ATPases have 2 components, CF(1) - the catalytic core - and CF(0) - the membrane proton channel. CF(1) has five subunits: alpha(3), beta(3), gamma(1), delta(1), epsilon(1). CF(0) has three main subunits: a(1), b(2) and c(9-12). The alpha and beta chains form an alternating ring which encloses part of the gamma chain. CF(1) is attached to CF(0) by a central stalk formed by the gamma and epsilon chains, while a peripheral stalk is formed by the delta and b chains.

It localises to the cell inner membrane. The enzyme catalyses ATP + H2O + 4 H(+)(in) = ADP + phosphate + 5 H(+)(out). In terms of biological role, produces ATP from ADP in the presence of a proton gradient across the membrane. The catalytic sites are hosted primarily by the beta subunits. The sequence is that of ATP synthase subunit beta from Shewanella loihica (strain ATCC BAA-1088 / PV-4).